A 74-amino-acid polypeptide reads, in one-letter code: ATP synthase subunit c (74 aa).

The next 2 membrane-spanning stretches (helical) occupy residues 5–25 (LAHI…IGVG) and 49–69 (LFIG…VALL).

Belongs to the ATPase C chain family. As to quaternary structure, F-type ATPases have 2 components, F(1) - the catalytic core - and F(0) - the membrane proton channel. F(1) has five subunits: alpha(3), beta(3), gamma(1), delta(1), epsilon(1). F(0) has three main subunits: a(1), b(2) and c(10-14). The alpha and beta chains form an alternating ring which encloses part of the gamma chain. F(1) is attached to F(0) by a central stalk formed by the gamma and epsilon chains, while a peripheral stalk is formed by the delta and b chains.

Its subcellular location is the cell inner membrane. In terms of biological role, f(1)F(0) ATP synthase produces ATP from ADP in the presence of a proton or sodium gradient. F-type ATPases consist of two structural domains, F(1) containing the extramembraneous catalytic core and F(0) containing the membrane proton channel, linked together by a central stalk and a peripheral stalk. During catalysis, ATP synthesis in the catalytic domain of F(1) is coupled via a rotary mechanism of the central stalk subunits to proton translocation. Key component of the F(0) channel; it plays a direct role in translocation across the membrane. A homomeric c-ring of between 10-14 subunits forms the central stalk rotor element with the F(1) delta and epsilon subunits. The polypeptide is ATP synthase subunit c (Ruegeria pomeroyi (strain ATCC 700808 / DSM 15171 / DSS-3) (Silicibacter pomeroyi)).